Here is a 372-residue protein sequence, read N- to C-terminus: Peptide chain release factor 1 (372 aa).

Q237 bears the N5-methylglutamine mark.

Belongs to the prokaryotic/mitochondrial release factor family. In terms of processing, methylated by PrmC. Methylation increases the termination efficiency of RF1.

It localises to the cytoplasm. Its function is as follows. Peptide chain release factor 1 directs the termination of translation in response to the peptide chain termination codons UAG and UAA. The chain is Peptide chain release factor 1 from Anaeromyxobacter sp. (strain Fw109-5).